The chain runs to 400 residues: Ribosomal RNA dihydrouridine synthase (400 aa).

Positions 14, 33, 34, 40, 46, 51, 131, 367, and 380 each coordinate FAD.

Belongs to the BaiN/RdsA family. RdsA subfamily. It depends on FAD as a cofactor.

The enzyme catalyses a 5,6-dihydrouridine in mRNA + NAD(+) = a uridine in mRNA + NADH + H(+). Functionally, catalyzes the synthesis of 5,6-dihydrouridine (D) at position 2449 in 23S rRNA. Can use NADH as a source of reducing equivalents but not NADPH. The protein is Ribosomal RNA dihydrouridine synthase of Escherichia coli (strain K12).